Consider the following 215-residue polypeptide: Negative modulator of initiation of replication (215 aa).

The disordered stretch occupies residues 71–93 (AETPKPSSEQEIRTPARKQSTQS). An interaction with DNA region spans residues 181 to 187 (NTNSGRK).

This sequence belongs to the SeqA family. In terms of assembly, homodimer. Polymerizes to form helical filaments.

The protein localises to the cytoplasm. Its function is as follows. Negative regulator of replication initiation, which contributes to regulation of DNA replication and ensures that replication initiation occurs exactly once per chromosome per cell cycle. Binds to pairs of hemimethylated GATC sequences in the oriC region, thus preventing assembly of replication proteins and re-initiation at newly replicated origins. Repression is relieved when the region becomes fully methylated. In Mannheimia succiniciproducens (strain KCTC 0769BP / MBEL55E), this protein is Negative modulator of initiation of replication.